The following is a 426-amino-acid chain: Glutamate-1-semialdehyde 2,1-aminomutase (426 aa).

Lys-265 bears the N6-(pyridoxal phosphate)lysine mark.

Belongs to the class-III pyridoxal-phosphate-dependent aminotransferase family. HemL subfamily. As to quaternary structure, homodimer. It depends on pyridoxal 5'-phosphate as a cofactor.

Its subcellular location is the cytoplasm. The catalysed reaction is (S)-4-amino-5-oxopentanoate = 5-aminolevulinate. It participates in porphyrin-containing compound metabolism; protoporphyrin-IX biosynthesis; 5-aminolevulinate from L-glutamyl-tRNA(Glu): step 2/2. In Salmonella heidelberg (strain SL476), this protein is Glutamate-1-semialdehyde 2,1-aminomutase.